Here is a 313-residue protein sequence, read N- to C-terminus: Protein FixB (313 aa).

Residue 255-283 coordinates FAD; sequence LYLAVGISGQIQHMVGANASQTIFAINKD.

It belongs to the ETF alpha-subunit/FixB family. As to quaternary structure, heterodimer of FixA and FixB.

It functions in the pathway amine and polyamine metabolism; carnitine metabolism. Required for anaerobic carnitine reduction. May bring reductant to CaiA. The protein is Protein FixB of Escherichia coli O1:K1 / APEC.